The following is a 147-amino-acid chain: Lectin-like protein BA14k (147 aa).

The N-terminal stretch at 1–26 (MNSFRKTCAGALALIFGATSIVPTVA) is a signal peptide. Residues 80–100 (GWWYPLAAFGAGAIIGGAISQ) traverse the membrane as a helical segment.

The protein belongs to the BA14k family.

The protein resides in the cell membrane. Has immunoglobulin-binding and hemagglutination properties, and can bind to mannose. Essential for virulence. May be involved in LPS biosynthesis or polysaccharide transport. The chain is Lectin-like protein BA14k from Brucella abortus (strain S19).